We begin with the raw amino-acid sequence, 137 residues long: Large ribosomal subunit protein uL16 (137 aa).

Belongs to the universal ribosomal protein uL16 family. Part of the 50S ribosomal subunit.

Its function is as follows. Binds 23S rRNA and is also seen to make contacts with the A and possibly P site tRNAs. The protein is Large ribosomal subunit protein uL16 of Mesoplasma florum (strain ATCC 33453 / NBRC 100688 / NCTC 11704 / L1) (Acholeplasma florum).